Reading from the N-terminus, the 302-residue chain is Sulfate adenylyltransferase subunit 2 (302 aa).

The disordered stretch occupies residues 280–302 (RQGRLIDSDQSASMEQKKRQGYF).

It belongs to the PAPS reductase family. CysD subfamily. Heterodimer composed of CysD, the smaller subunit, and CysN.

The catalysed reaction is sulfate + ATP + H(+) = adenosine 5'-phosphosulfate + diphosphate. The protein operates within sulfur metabolism; hydrogen sulfide biosynthesis; sulfite from sulfate: step 1/3. Functionally, with CysN forms the ATP sulfurylase (ATPS) that catalyzes the adenylation of sulfate producing adenosine 5'-phosphosulfate (APS) and diphosphate, the first enzymatic step in sulfur assimilation pathway. APS synthesis involves the formation of a high-energy phosphoric-sulfuric acid anhydride bond driven by GTP hydrolysis by CysN coupled to ATP hydrolysis by CysD. In Shewanella baltica (strain OS195), this protein is Sulfate adenylyltransferase subunit 2.